A 91-amino-acid polypeptide reads, in one-letter code: MANNPGAKKAIRKIARRTEVNTARRSRVRTFLRKFEDAIAKGDVAVAKAAFVEAQSELMRAVSKGVVHPNTGSRKVSRLAARLKKLDKAAA.

Belongs to the bacterial ribosomal protein bS20 family.

In terms of biological role, binds directly to 16S ribosomal RNA. This Caulobacter vibrioides (strain ATCC 19089 / CIP 103742 / CB 15) (Caulobacter crescentus) protein is Small ribosomal subunit protein bS20.